The chain runs to 130 residues: Small ribosomal subunit protein eS6 (130 aa).

Residues 78 to 98 (SGPPGFRPERKGERRRKTVRG) are disordered.

Belongs to the eukaryotic ribosomal protein eS6 family.

In Methanopyrus kandleri (strain AV19 / DSM 6324 / JCM 9639 / NBRC 100938), this protein is Small ribosomal subunit protein eS6.